The following is a 366-amino-acid chain: Endophilin-A (366 aa).

The 231-residue stretch at 18–248 (TEKMGGAEGT…LQEKRSEAES (231 aa)) folds into the BAR domain. Residues 227-247 (QCADVLRGLQETLQEKRSEAE) are a coiled coil. The interval 266 to 295 (GGGGGLNEDGTPSHISSSASPLPSPMRSPA) is disordered. Positions 277–294 (PSHISSSASPLPSPMRSP) are enriched in low complexity. An SH3 domain is found at 305-364 (QQQPCCQALYDFDPENPGELGFKENDIITLLNRVDDNWYEGSVNGRTGYFPQSYVQVQVP).

This sequence belongs to the endophilin family.

It is found in the cytoplasm. It localises to the membrane. Its function is as follows. Required presynaptically at the neuromuscular junction. Implicated in synaptic vesicle endocytosis. The protein is Endophilin-A of Drosophila willistoni (Fruit fly).